We begin with the raw amino-acid sequence, 469 residues long: ATP synthase subunit beta (469 aa).

Residue 157–164 coordinates ATP; sequence GGAGVGKT.

The protein belongs to the ATPase alpha/beta chains family. F-type ATPases have 2 components, CF(1) - the catalytic core - and CF(0) - the membrane proton channel. CF(1) has five subunits: alpha(3), beta(3), gamma(1), delta(1), epsilon(1). CF(0) has three main subunits: a(1), b(2) and c(9-12). The alpha and beta chains form an alternating ring which encloses part of the gamma chain. CF(1) is attached to CF(0) by a central stalk formed by the gamma and epsilon chains, while a peripheral stalk is formed by the delta and b chains.

Its subcellular location is the cell membrane. It catalyses the reaction ATP + H2O + 4 H(+)(in) = ADP + phosphate + 5 H(+)(out). Produces ATP from ADP in the presence of a proton gradient across the membrane. The catalytic sites are hosted primarily by the beta subunits. In Brevibacillus brevis (strain 47 / JCM 6285 / NBRC 100599), this protein is ATP synthase subunit beta.